A 189-amino-acid chain; its full sequence is Xanthine phosphoribosyltransferase (189 aa).

Positions 20 and 27 each coordinate xanthine. 127-131 (AYGNA) is a 5-phospho-alpha-D-ribose 1-diphosphate binding site. Xanthine is bound at residue Lys-155.

This sequence belongs to the purine/pyrimidine phosphoribosyltransferase family. Xpt subfamily. Homodimer.

It is found in the cytoplasm. The enzyme catalyses XMP + diphosphate = xanthine + 5-phospho-alpha-D-ribose 1-diphosphate. It participates in purine metabolism; XMP biosynthesis via salvage pathway; XMP from xanthine: step 1/1. Functionally, converts the preformed base xanthine, a product of nucleic acid breakdown, to xanthosine 5'-monophosphate (XMP), so it can be reused for RNA or DNA synthesis. In Bacteroides fragilis (strain ATCC 25285 / DSM 2151 / CCUG 4856 / JCM 11019 / LMG 10263 / NCTC 9343 / Onslow / VPI 2553 / EN-2), this protein is Xanthine phosphoribosyltransferase.